A 398-amino-acid polypeptide reads, in one-letter code: Phosphoglycerate kinase (398 aa).

Substrate is bound by residues 20–22, R35, 58–61, R118, and R155; these read DFN and HLGK. Residues K208, G296, E327, and 354–357 contribute to the ATP site; that span reads GGDS.

The protein belongs to the phosphoglycerate kinase family. In terms of assembly, monomer.

It is found in the cytoplasm. It carries out the reaction (2R)-3-phosphoglycerate + ATP = (2R)-3-phospho-glyceroyl phosphate + ADP. It functions in the pathway carbohydrate degradation; glycolysis; pyruvate from D-glyceraldehyde 3-phosphate: step 2/5. This is Phosphoglycerate kinase from Fusobacterium nucleatum subsp. nucleatum (strain ATCC 25586 / DSM 15643 / BCRC 10681 / CIP 101130 / JCM 8532 / KCTC 2640 / LMG 13131 / VPI 4355).